We begin with the raw amino-acid sequence, 202 residues long: Imidazoleglycerol-phosphate dehydratase (202 aa).

Belongs to the imidazoleglycerol-phosphate dehydratase family.

It localises to the cytoplasm. It catalyses the reaction D-erythro-1-(imidazol-4-yl)glycerol 3-phosphate = 3-(imidazol-4-yl)-2-oxopropyl phosphate + H2O. Its pathway is amino-acid biosynthesis; L-histidine biosynthesis; L-histidine from 5-phospho-alpha-D-ribose 1-diphosphate: step 6/9. This chain is Imidazoleglycerol-phosphate dehydratase, found in Synechococcus sp. (strain CC9605).